The following is a 517-amino-acid chain: Putative alpha-L-fucosidase 1 (517 aa).

The signal sequence occupies residues 1–20; it reads MATILLLLLGLLVGLPLLRA. N-linked (GlcNAc...) asparagine glycans are attached at residues asparagine 119, asparagine 249, asparagine 296, asparagine 321, asparagine 352, asparagine 496, and asparagine 511.

This sequence belongs to the glycosyl hydrolase 29 family.

It is found in the secreted. It localises to the extracellular space. Its subcellular location is the apoplast. It catalyses the reaction an alpha-L-fucoside + H2O = L-fucose + an alcohol. Its function is as follows. Alpha-L-fucosidase is responsible for hydrolyzing the alpha-1,6-linked fucose joined to the reducing-end N-acetylglucosamine of the carbohydrate moieties of glycoproteins. Active only against 2'-fucosyl-lactitol when heterologously expressed. In Oryza sativa subsp. japonica (Rice), this protein is Putative alpha-L-fucosidase 1.